The primary structure comprises 95 residues: Small ribosomal subunit protein bS6 (95 aa).

The protein belongs to the bacterial ribosomal protein bS6 family. In terms of assembly, part of the 30S ribosomal subunit.

Functionally, binds together with bS18 to 16S ribosomal RNA. The polypeptide is Small ribosomal subunit protein bS6 (rpsF) (Bacillus subtilis (strain 168)).